Here is a 118-residue protein sequence, read N- to C-terminus: Large ribosomal subunit protein bL19 (118 aa).

This sequence belongs to the bacterial ribosomal protein bL19 family.

This protein is located at the 30S-50S ribosomal subunit interface and may play a role in the structure and function of the aminoacyl-tRNA binding site. The protein is Large ribosomal subunit protein bL19 of Lactiplantibacillus plantarum (strain ATCC BAA-793 / NCIMB 8826 / WCFS1) (Lactobacillus plantarum).